A 260-amino-acid chain; its full sequence is Lysozyme D (260 aa).

A signal peptide spans 1–19; that stretch reads MRLLVTLILLIFVLTVSGQ. Positions 83–148 are disordered; that stretch reads GSTTTGGTGS…SGGSSGSGSG (66 aa). Gly residues-rich tracts occupy residues 101–119 and 129–147; these read SGSGSGSGSGSGSGSGSGT and SGSGSGSSSGSGGSSGSGS.

The protein belongs to the dictyostelium lysozyme family. Contains disulfide bonds.

The protein resides in the cytoplasmic vesicle lumen. The catalysed reaction is Hydrolysis of (1-&gt;4)-beta-linkages between N-acetylmuramic acid and N-acetyl-D-glucosamine residues in a peptidoglycan and between N-acetyl-D-glucosamine residues in chitodextrins.. Its function is as follows. Has antibacterial activity. This is Lysozyme D (alyD-1) from Dictyostelium discoideum (Social amoeba).